A 432-amino-acid chain; its full sequence is Nematocyst expressed protein 3-like (432 aa).

The first 19 residues, methionine 1–alanine 19, serve as a signal peptide directing secretion. Disulfide bonds link cysteine 52–cysteine 91, cysteine 59–cysteine 84, cysteine 73–cysteine 88, cysteine 125–cysteine 140, cysteine 157–cysteine 176, and cysteine 166–cysteine 180. ShKT domains are found at residues cysteine 59 to cysteine 91, valine 107 to cysteine 143, and glycine 149 to tyrosine 183. Residues glycine 235 to alanine 313 show a composition bias toward low complexity. The tract at residues glycine 235–histidine 432 is disordered. The segment covering alanine 314–alanine 330 has biased composition (pro residues). Residues proline 331–glycine 408 show a composition bias toward low complexity. The span at lysine 409–histidine 432 shows a compositional bias: basic residues.

The protein belongs to the NEP3 family. In terms of tissue distribution, nematocytes. In late planulae, transcripts are found throughout the ectoderm in nematocytes, with high concentration of expressing cells in the oral pole. In primary polyps, is expressed in nematocytes in the body wall and physa ectoderm and in the upper and lower pharynx.

It is found in the nematocyst. The protein localises to the secreted. Probable toxin. This chain is Nematocyst expressed protein 3-like, found in Nematostella vectensis (Starlet sea anemone).